Consider the following 100-residue polypeptide: Large ribosomal subunit protein uL23 (100 aa).

This sequence belongs to the universal ribosomal protein uL23 family. In terms of assembly, part of the 50S ribosomal subunit. Contacts protein L29, and trigger factor when it is bound to the ribosome.

In terms of biological role, one of the early assembly proteins it binds 23S rRNA. One of the proteins that surrounds the polypeptide exit tunnel on the outside of the ribosome. Forms the main docking site for trigger factor binding to the ribosome. This is Large ribosomal subunit protein uL23 from Thermotoga sp. (strain RQ2).